Reading from the N-terminus, the 120-residue chain is Large ribosomal subunit protein bL12 (120 aa).

Belongs to the bacterial ribosomal protein bL12 family. As to quaternary structure, homodimer. Part of the ribosomal stalk of the 50S ribosomal subunit. Forms a multimeric L10(L12)X complex, where L10 forms an elongated spine to which 2 to 4 L12 dimers bind in a sequential fashion. Binds GTP-bound translation factors.

Its function is as follows. Forms part of the ribosomal stalk which helps the ribosome interact with GTP-bound translation factors. Is thus essential for accurate translation. In Alkaliphilus metalliredigens (strain QYMF), this protein is Large ribosomal subunit protein bL12.